The chain runs to 443 residues: Glucose-6-phosphate isomerase (443 aa).

The active-site Proton donor is the Glu285. Active-site residues include His306 and Lys420.

Belongs to the GPI family.

It localises to the cytoplasm. The enzyme catalyses alpha-D-glucose 6-phosphate = beta-D-fructose 6-phosphate. The protein operates within carbohydrate biosynthesis; gluconeogenesis. It functions in the pathway carbohydrate degradation; glycolysis; D-glyceraldehyde 3-phosphate and glycerone phosphate from D-glucose: step 2/4. Functionally, catalyzes the reversible isomerization of glucose-6-phosphate to fructose-6-phosphate. The chain is Glucose-6-phosphate isomerase from Staphylococcus aureus (strain bovine RF122 / ET3-1).